We begin with the raw amino-acid sequence, 416 residues long: MATQRRANPSSLHLITVFSLLVAVVSAEVFFEESFNDGWESRWVKSEWKKDENMAGEWNHTSGKWNGDANDKGIQTSEDYRFYAISAEFPEFSNKGKNLVFQFSVKHEQKLDCGGGYMKLLSGDVDQKKFGGDTPYSIMFGPDICGYSTKKVHAILTYNDTNHLIKKEVPCETDQLTHVYTFILRPDATYSILIDNVEKQSGSLYSDWDLLPPKTIKDPSAKKPEDWDEKEFIDDPEDKKPEGYDDIPEEITDPDAKKPEDWDDEEDGEWTAPTIPNPEYKGPWKPKKIKNPNYKGKWKAPLIDNPDFKDDPDLYVFPKLKYVGVELWQVKSGTLFDNIVICDDPEYAKAIAEETWGKQKDAEKAAFEEAEKKREEEESKAAPADSDAEEDDDADDDSDDADDKSESKDDEAHDEL.

Positions 1-27 (MATQRRANPSSLHLITVFSLLVAVVSA) are cleaved as a signal peptide. Asparagine 59 is a glycosylation site (N-linked (GlcNAc...) asparagine). Residues cysteine 113 and cysteine 145 are joined by a disulfide bond. An alpha-D-glucoside-binding residues include tyrosine 117, lysine 119, tyrosine 136, and aspartate 143. A glycan (N-linked (GlcNAc...) asparagine) is linked at asparagine 159. A run of 7 repeats spans residues 199-210 (KQSGSLYSDWDL), 218-229 (DPSAKKPEDWDE), 235-246 (DPEDKKPEGYDD), 253-264 (DPDAKKPEDWDD), 268-278 (GEWTAPTIPNP), 282-292 (GPWKPKKIKNP), and 296-306 (GKWKAPLIDNP). Positions 199–264 (KQSGSLYSDW…DAKKPEDWDD (66 aa)) are 4 X approximate repeats. The segment covering 215–225 (TIKDPSAKKPE) has biased composition (basic and acidic residues). The disordered stretch occupies residues 215-286 (TIKDPSAKKP…NPEYKGPWKP (72 aa)). Acidic residues-rich tracts occupy residues 226–236 (DWDEKEFIDDP) and 244–253 (YDDIPEEITD). Positions 268-306 (GEWTAPTIPNPEYKGPWKPKKIKNPNYKGKWKAPLIDNP) are 3 X approximate repeats. Glutamate 326 provides a ligand contact to an alpha-D-glucoside. Over residues 355-380 (TWGKQKDAEKAAFEEAEKKREEEESK) the composition is skewed to basic and acidic residues. The tract at residues 355–416 (TWGKQKDAEK…SKDDEAHDEL (62 aa)) is disordered. The segment covering 386 to 403 (SDAEEDDDADDDSDDADD) has biased composition (acidic residues). Residues 404–416 (KSESKDDEAHDEL) show a composition bias toward basic and acidic residues. The Prevents secretion from ER signature appears at 413-416 (HDEL).

The protein belongs to the calreticulin family.

It is found in the endoplasmic reticulum lumen. Functionally, molecular calcium-binding chaperone promoting folding, oligomeric assembly and quality control in the ER via the calreticulin/calnexin cycle. This lectin may interact transiently with almost all of the monoglucosylated glycoproteins that are synthesized in the ER. The polypeptide is Calreticulin (CAL1) (Nicotiana plumbaginifolia (Leadwort-leaved tobacco)).